The sequence spans 179 residues: MIPPFSFASWVAENEDKLHPPVNNYCLYSGEDFTLMVVGGPNSRNDYHGVFIMVVNQTEEWFYQVKGDMLLRIVENNTTFRDISIKEGEMFLLPGNTPHNPVRFRDTIGLVMERKRPEDSLDRLRWYCSKGKHKKPTIIREEIFHCADLGTQLKPLIERWQIDEESRRCGACGAIADPK.

Arg-44 is an O2 binding site. Residues His-48, Glu-60, and His-99 each contribute to the Fe cation site. Glu-60 is a substrate binding site. Substrate contacts are provided by Arg-103 and Glu-113.

This sequence belongs to the 3-HAO family. Requires Fe(2+) as cofactor.

Its subcellular location is the cytoplasm. The catalysed reaction is 3-hydroxyanthranilate + O2 = (2Z,4Z)-2-amino-3-carboxymuconate 6-semialdehyde. Its pathway is cofactor biosynthesis; NAD(+) biosynthesis; quinolinate from L-kynurenine: step 3/3. Functionally, catalyzes the oxidative ring opening of 3-hydroxyanthranilate to 2-amino-3-carboxymuconate semialdehyde, which spontaneously cyclizes to quinolinate. This is 3-hydroxyanthranilate 3,4-dioxygenase 2 (bna1-2) from Aspergillus oryzae (strain ATCC 42149 / RIB 40) (Yellow koji mold).